The sequence spans 430 residues: MANVVVVGAQWGDEGKGKIVDWLSEQADIVARFQGGHNAGHTLVINGETYKLALLPSGVLRPSKLAVIGNGVVFDPQAFLDEVERLTKQGVAISPENLRVAENVTLILPLHRELDALRENASKATSIGTTQRGIGPAYEDKVGRRAIRLMDLADIDTLPHKIERLLTHHNALRRGLGLSEFEAGAILKELTALAPRLLPYAETVWRLLDIKRREGKRILFEGAQGALLDVDHGTYPYVTSSNTVAAQAATGTGMGPGSVGYVLGICKAYTTRVGQGPFPTELDNEIGRKIGERGREFGTNTGRPRRCGWFDAVLVRQTVRTCGIHGLALTKLDILDGFDSIEVCVGYMLDGKEIDHLPAGEGAQARVVPIYETIEGWKEPTANARSWADLPAQAVKYVRRVEELVGCPIALLSTSPEREDTILVQNPFEA.

Residues Gly-12–Lys-18 and Gly-40–Thr-42 each bind GTP. Asp-13 acts as the Proton acceptor in catalysis. Positions 13 and 40 each coordinate Mg(2+). IMP is bound by residues Asp-13–Lys-16, Asn-38–His-41, Thr-130, Arg-144, Gln-224, Thr-239, and Arg-303. His-41 (proton donor) is an active-site residue. A substrate-binding site is contributed by Thr-299–Arg-305. GTP contacts are provided by residues Arg-305, Lys-331–Asp-333, and Ser-413–Ser-415.

The protein belongs to the adenylosuccinate synthetase family. In terms of assembly, homodimer. It depends on Mg(2+) as a cofactor.

The protein resides in the cytoplasm. The catalysed reaction is IMP + L-aspartate + GTP = N(6)-(1,2-dicarboxyethyl)-AMP + GDP + phosphate + 2 H(+). It functions in the pathway purine metabolism; AMP biosynthesis via de novo pathway; AMP from IMP: step 1/2. Plays an important role in the de novo pathway of purine nucleotide biosynthesis. Catalyzes the first committed step in the biosynthesis of AMP from IMP. The chain is Adenylosuccinate synthetase from Rhodopseudomonas palustris (strain BisB5).